A 117-amino-acid chain; its full sequence is Holo-[acyl-carrier-protein] synthase (117 aa).

Mg(2+) contacts are provided by Asp-8 and Glu-58.

It belongs to the P-Pant transferase superfamily. AcpS family. Mg(2+) serves as cofactor.

The protein localises to the cytoplasm. It catalyses the reaction apo-[ACP] + CoA = holo-[ACP] + adenosine 3',5'-bisphosphate + H(+). Its function is as follows. Transfers the 4'-phosphopantetheine moiety from coenzyme A to a Ser of acyl-carrier-protein. In Enterococcus faecalis (strain ATCC 700802 / V583), this protein is Holo-[acyl-carrier-protein] synthase.